Here is a 247-residue protein sequence, read N- to C-terminus: Carboxy-S-adenosyl-L-methionine synthase (247 aa).

S-adenosyl-L-methionine-binding positions include Tyr-40, 65 to 67, 90 to 91, 122 to 123, Asn-137, and Arg-204; these read GAS, DN, and DI.

It belongs to the class I-like SAM-binding methyltransferase superfamily. Cx-SAM synthase family. Homodimer.

It carries out the reaction prephenate + S-adenosyl-L-methionine = carboxy-S-adenosyl-L-methionine + 3-phenylpyruvate + H2O. In terms of biological role, catalyzes the conversion of S-adenosyl-L-methionine (SAM) to carboxy-S-adenosyl-L-methionine (Cx-SAM). This Ectopseudomonas mendocina (strain ymp) (Pseudomonas mendocina) protein is Carboxy-S-adenosyl-L-methionine synthase.